A 179-amino-acid chain; its full sequence is Large ribosomal subunit protein uL5 (179 aa).

It belongs to the universal ribosomal protein uL5 family. In terms of assembly, part of the 50S ribosomal subunit; part of the 5S rRNA/L5/L18/L25 subcomplex. Contacts the 5S rRNA and the P site tRNA. Forms a bridge to the 30S subunit in the 70S ribosome.

Its function is as follows. This is one of the proteins that bind and probably mediate the attachment of the 5S RNA into the large ribosomal subunit, where it forms part of the central protuberance. In the 70S ribosome it contacts protein S13 of the 30S subunit (bridge B1b), connecting the 2 subunits; this bridge is implicated in subunit movement. Contacts the P site tRNA; the 5S rRNA and some of its associated proteins might help stabilize positioning of ribosome-bound tRNAs. The sequence is that of Large ribosomal subunit protein uL5 from Pseudomonas paraeruginosa (strain DSM 24068 / PA7) (Pseudomonas aeruginosa (strain PA7)).